The following is a 312-amino-acid chain: Ribosomal protein L11 methyltransferase (312 aa).

Threonine 160, glycine 181, aspartate 203, and asparagine 246 together coordinate S-adenosyl-L-methionine.

It belongs to the methyltransferase superfamily. PrmA family.

Its subcellular location is the cytoplasm. The catalysed reaction is L-lysyl-[protein] + 3 S-adenosyl-L-methionine = N(6),N(6),N(6)-trimethyl-L-lysyl-[protein] + 3 S-adenosyl-L-homocysteine + 3 H(+). In terms of biological role, methylates ribosomal protein L11. This chain is Ribosomal protein L11 methyltransferase, found in Staphylococcus saprophyticus subsp. saprophyticus (strain ATCC 15305 / DSM 20229 / NCIMB 8711 / NCTC 7292 / S-41).